A 217-amino-acid polypeptide reads, in one-letter code: Glycerol-3-phosphate acyltransferase (217 aa).

The next 5 helical transmembrane spans lie at 1–21, 54–74, 84–104, 126–146, and 165–185; these read MAWA…SIPT, TAAI…VGGV, AIVP…AAIL, VLLV…LFML, and LLML…LAGI.

This sequence belongs to the PlsY family. In terms of assembly, probably interacts with PlsX.

It is found in the cell inner membrane. It carries out the reaction an acyl phosphate + sn-glycerol 3-phosphate = a 1-acyl-sn-glycero-3-phosphate + phosphate. The protein operates within lipid metabolism; phospholipid metabolism. Functionally, catalyzes the transfer of an acyl group from acyl-phosphate (acyl-PO(4)) to glycerol-3-phosphate (G3P) to form lysophosphatidic acid (LPA). This enzyme utilizes acyl-phosphate as fatty acyl donor, but not acyl-CoA or acyl-ACP. This Rippkaea orientalis (strain PCC 8801 / RF-1) (Cyanothece sp. (strain PCC 8801)) protein is Glycerol-3-phosphate acyltransferase.